Reading from the N-terminus, the 469-residue chain is ATP-dependent protease ATPase subunit HslU (469 aa).

Residues I24, 66–71 (GVGKTE), D282, E347, and R419 each bind ATP.

It belongs to the ClpX chaperone family. HslU subfamily. As to quaternary structure, a double ring-shaped homohexamer of HslV is capped on each side by a ring-shaped HslU homohexamer. The assembly of the HslU/HslV complex is dependent on binding of ATP.

It localises to the cytoplasm. Functionally, ATPase subunit of a proteasome-like degradation complex; this subunit has chaperone activity. The binding of ATP and its subsequent hydrolysis by HslU are essential for unfolding of protein substrates subsequently hydrolyzed by HslV. HslU recognizes the N-terminal part of its protein substrates and unfolds these before they are guided to HslV for hydrolysis. The chain is ATP-dependent protease ATPase subunit HslU from Listeria welshimeri serovar 6b (strain ATCC 35897 / DSM 20650 / CCUG 15529 / CIP 8149 / NCTC 11857 / SLCC 5334 / V8).